The following is a 221-amino-acid chain: Protein-L-isoaspartate O-methyltransferase (221 aa).

The active site involves S57.

The protein belongs to the methyltransferase superfamily. L-isoaspartyl/D-aspartyl protein methyltransferase family.

Its subcellular location is the cytoplasm. The catalysed reaction is [protein]-L-isoaspartate + S-adenosyl-L-methionine = [protein]-L-isoaspartate alpha-methyl ester + S-adenosyl-L-homocysteine. In terms of biological role, catalyzes the methyl esterification of L-isoaspartyl residues in peptides and proteins that result from spontaneous decomposition of normal L-aspartyl and L-asparaginyl residues. It plays a role in the repair and/or degradation of damaged proteins. In Korarchaeum cryptofilum (strain OPF8), this protein is Protein-L-isoaspartate O-methyltransferase.